The following is a 375-amino-acid chain: S-(hydroxymethyl)glutathione dehydrogenase (375 aa).

Cys40 serves as a coordination point for Zn(2+). His41 lines the NAD(+) pocket. Zn(2+)-binding residues include His62, Glu63, Cys92, Cys95, Cys98, Cys106, and Cys170. Residues 195–200 (GLGGIG), Asp219, 293–295 (IGV), and 318–320 (TAF) contribute to the NAD(+) site.

The protein belongs to the zinc-containing alcohol dehydrogenase family. Class-III subfamily. Homotetramer. The cofactor is Zn(2+).

It catalyses the reaction a primary alcohol + NAD(+) = an aldehyde + NADH + H(+). The catalysed reaction is a secondary alcohol + NAD(+) = a ketone + NADH + H(+). It carries out the reaction S-(hydroxymethyl)glutathione + NADP(+) = S-formylglutathione + NADPH + H(+). The enzyme catalyses S-(hydroxymethyl)glutathione + NAD(+) = S-formylglutathione + NADH + H(+). It catalyses the reaction S-nitrosoglutathione + NADH + H(+) = S-(hydroxysulfenamide)glutathione + NAD(+). Oxidizes long-chain alcohols and, in the presence of glutathione, is able to oxidize formaldehyde. Also acts as a S-nitroso-glutathione reductase by catalyzing the NADH-dependent reduction of S-nitrosoglutathione, thereby regulating protein S-nitrosylation. The sequence is that of S-(hydroxymethyl)glutathione dehydrogenase (flhA) from Paracoccus denitrificans.